The primary structure comprises 177 residues: ATP-dependent protease subunit HslV (177 aa).

Residue Thr-7 is part of the active site. Na(+)-binding residues include Ala-162, Cys-165, and Thr-168.

It belongs to the peptidase T1B family. HslV subfamily. In terms of assembly, a double ring-shaped homohexamer of HslV is capped on each side by a ring-shaped HslU homohexamer. The assembly of the HslU/HslV complex is dependent on binding of ATP.

The protein localises to the cytoplasm. It catalyses the reaction ATP-dependent cleavage of peptide bonds with broad specificity.. Allosterically activated by HslU binding. Its function is as follows. Protease subunit of a proteasome-like degradation complex believed to be a general protein degrading machinery. The protein is ATP-dependent protease subunit HslV of Thioalkalivibrio sulfidiphilus (strain HL-EbGR7).